A 238-amino-acid chain; its full sequence is Inactive glycoside hydrolase XLP1 (238 aa).

The first 19 residues, 1-19 (MKSFLIAIVIAVLLPVSAA), serve as a signal peptide directing secretion. Glu-133 is an active-site residue. Residues Asn-171 and Asn-187 are each glycosylated (N-linked (GlcNAc...) asparagine). Glu-219 is a catalytic residue.

It belongs to the glycosyl hydrolase 12 (cellulase H) family. Interacts with host apoplastic glucanase inhibitor GIP2.

It localises to the secreted. In terms of biological role, non-functional secreted XEG1-like protein that binds to host Nicotiana benthamiana apoplastic glucanase inhibitor protein GIP2 more tightly than does XEG1, thus it outcompetes XEG1 for GIP2 binding and frees functional XEG1 to support P.parasitica infection. With XEG1, is required to elevate apoplastic sugar during P.parasitica infection. In Phytophthora nicotianae (strain INRA-310) (Phytophthora parasitica), this protein is Inactive glycoside hydrolase XLP1.